The primary structure comprises 83 residues: BmKBT-like peptide (83 aa).

The first 19 residues, Met1–Thr19, serve as a signal peptide directing secretion. One can recognise an LCN-type CS-alpha/beta domain in the interval Lys21–Arg81. 4 disulfide bridges follow: Cys31/Cys80, Cys35/Cys54, Cys41/Cys61, and Cys45/Cys63. Residue Lys83 is a propeptide, removed by a carboxypeptidase.

The protein belongs to the long (4 C-C) scorpion toxin superfamily. Sodium channel inhibitor family. Beta subfamily. As to expression, expressed by the venom gland.

Its subcellular location is the secreted. Sodium channel inhibitor. Possesses potent toxicity in mice but induces only paralysis in cotton bollworm. This chain is BmKBT-like peptide, found in Olivierus martensii (Manchurian scorpion).